The following is a 791-amino-acid chain: AP-1 complex subunit gamma-like 2 (791 aa).

The GAE domain occupies 671 to 786 (APIPSVRVFE…QEIFEVDNLP (116 aa)).

This sequence belongs to the adaptor complexes large subunit family. In terms of assembly, may interact with AP1S1/Sigma1A-adaptin and AP1S2/Sigma1B-adaptin. Probably does not interact with APB1. Interacts (via GAE domain) with RABEP1, NECAP1, CLINT1 and AFTPH/aftiphilin. Interacts with HBV major surface antigen L. Interacts with HBV core protein C in a ubiquitin-dependent manner. Binds ubiquitin. In terms of tissue distribution, widely expressed.

The protein localises to the golgi apparatus membrane. Its subcellular location is the cytoplasmic vesicle membrane. It localises to the endosome membrane. In terms of biological role, may function in protein sorting in late endosomes or multivesucular bodies (MVBs). Involved in MVB-assisted maturation of hepatitis B virus (HBV). This chain is AP-1 complex subunit gamma-like 2 (Ap1g2), found in Mus musculus (Mouse).